We begin with the raw amino-acid sequence, 351 residues long: DNA-directed RNA polymerase subunit alpha (351 aa).

The interval 1-236 (MSVNTKNWQE…DQLTLFVHFE (236 aa)) is alpha N-terminal domain (alpha-NTD). The alpha C-terminal domain (alpha-CTD) stretch occupies residues 256–351 (DDANQLNRYL…AKKLEQELLG (96 aa)).

This sequence belongs to the RNA polymerase alpha chain family. In terms of assembly, homodimer. The RNAP catalytic core consists of 2 alpha, 1 beta, 1 beta' and 1 omega subunit. When a sigma factor is associated with the core the holoenzyme is formed, which can initiate transcription.

The catalysed reaction is RNA(n) + a ribonucleoside 5'-triphosphate = RNA(n+1) + diphosphate. Its function is as follows. DNA-dependent RNA polymerase catalyzes the transcription of DNA into RNA using the four ribonucleoside triphosphates as substrates. The chain is DNA-directed RNA polymerase subunit alpha from Erythrobacter litoralis (strain HTCC2594).